The chain runs to 370 residues: 3-dehydroquinate synthase (370 aa).

Residues 112–116 (GVVGD), 136–137 (TS), Lys-149, Lys-158, and 176–179 (TLRT) each bind NAD(+). Residues Glu-191, His-254, and His-276 each coordinate Zn(2+).

Belongs to the sugar phosphate cyclases superfamily. Dehydroquinate synthase family. It depends on Co(2+) as a cofactor. Requires Zn(2+) as cofactor. The cofactor is NAD(+).

The protein localises to the cytoplasm. The enzyme catalyses 7-phospho-2-dehydro-3-deoxy-D-arabino-heptonate = 3-dehydroquinate + phosphate. The protein operates within metabolic intermediate biosynthesis; chorismate biosynthesis; chorismate from D-erythrose 4-phosphate and phosphoenolpyruvate: step 2/7. Catalyzes the conversion of 3-deoxy-D-arabino-heptulosonate 7-phosphate (DAHP) to dehydroquinate (DHQ). The polypeptide is 3-dehydroquinate synthase (Xanthomonas campestris pv. campestris (strain 8004)).